The chain runs to 418 residues: Putative ion-transport protein YfeO (418 aa).

12 helical membrane passes run 10–30 (LLLSLPAVAIGIASSLILIVV), 54–74 (DSPLWIIGVLTLTGIAVGLVI), 99–119 (ALPGLIVALILGLAGGVSLGP), 120–140 (EHPIMTVNIALAVAIGARLLP), 149–169 (ILASAGTIGALFGTPVAAALI), 186–206 (LFAPLMAAAAGALTTGLFFHP), 223–243 (ILSGAIVAAIAIAAGMVAVWC), 258–278 (VLVLGIGGFILGILGVIGGPV), 300–320 (DYFLLAVIKLAALVVAAASGF), 322–342 (GGRIFPAVFVGVALGLMLHEH), 343–363 (VPAVPAAITVSCAILGIVLVV), and 371–391 (LFMAAVVVPNTTLLPLLCIVM).

It belongs to the chloride channel (TC 2.A.49) family.

Its subcellular location is the cell membrane. This is Putative ion-transport protein YfeO from Escherichia coli O8 (strain IAI1).